The sequence spans 226 residues: Probable N-acetyl-alpha-D-glucosaminyl L-malate deacetylase 2 (226 aa).

Zn(2+) is bound by residues histidine 13, aspartate 16, and histidine 127.

The protein belongs to the PIGL family. Zn(2+) is required as a cofactor.

It catalyses the reaction (S)-malyl N-acetyl-alpha-D-glucosaminide + H2O = (S)-malyl alpha-D-glucosaminide + acetate. Functionally, involved in bacillithiol (BSH) biosynthesis. Catalyzes the second step of the pathway, the deacetylation of N-acetylglucosaminylmalate (GlcNAc-Mal) to glucosamine malate (GlcN-Mal). Could also be involved in bacillithiol-detoxifying pathways through formation of S-mercapturic adducts. In Bacillus anthracis, this protein is Probable N-acetyl-alpha-D-glucosaminyl L-malate deacetylase 2.